Here is a 254-residue protein sequence, read N- to C-terminus: Triosephosphate isomerase (254 aa).

Asn9–Lys11 provides a ligand contact to substrate. Catalysis depends on His95, which acts as the Electrophile. Glu167 functions as the Proton acceptor in the catalytic mechanism. Substrate contacts are provided by residues Gly173, Ser213, and Gly234–Gly235.

Belongs to the triosephosphate isomerase family. As to quaternary structure, homodimer.

Its subcellular location is the cytoplasm. It catalyses the reaction D-glyceraldehyde 3-phosphate = dihydroxyacetone phosphate. It participates in carbohydrate biosynthesis; gluconeogenesis. It functions in the pathway carbohydrate degradation; glycolysis; D-glyceraldehyde 3-phosphate from glycerone phosphate: step 1/1. Involved in the gluconeogenesis. Catalyzes stereospecifically the conversion of dihydroxyacetone phosphate (DHAP) to D-glyceraldehyde-3-phosphate (G3P). This Roseiflexus castenholzii (strain DSM 13941 / HLO8) protein is Triosephosphate isomerase.